The primary structure comprises 440 residues: MESQQLSQHSPNSHGSACASVTSKEVHTNQDPLDVSASKTEECEKASTKANSQQTTTPASSAVPENPHHASPQPASVPPPQNGPYPQQCMMTQNQANPSGWSFYGHPSMIPYTPYQMSPMYFPPGPQSQFPQYPSSVGTPLSTPSPESGNTFTDSSSADSDMTSTKKYVRPPPMLTSPNDFPNWVKTYIKFLQNSNLGGIIPTVNGKPVRQITDDELTFLYNTFQIFAPSQFLPTWVKDILSVDYTDIMKILSKSIEKMQSDTQEANDIVTLANLQYNGSTPADAFETKVTNIIDRLNNNGIHINNKVACQLIMRGLSGEYKFLRYTRHRHLNMTVAELFLDIHAIYEEQQGSRNSKPNYRRNPSDEKNDSRSYTNTTKPKVIARNPQKTNNSKSKTARAHNVSTSNNSPSTDNDSISKSTTEPIQLNNKHDLHLRPETY.

3 stretches are compositionally biased toward polar residues: residues 1–23 (MESQ…SVTS), 48–60 (TKAN…TPAS), and 127–152 (QSQF…GNTF). Disordered regions lie at residues 1 to 93 (MESQ…MMTQ), 126 to 173 (PQSQ…RPPP), and 352 to 440 (GSRN…PETY). Residues 153-165 (TDSSSADSDMTST) show a composition bias toward low complexity. The RNA-binding stretch occupies residues 299-401 (NNGIHINNKV…NSKSKTARAH (103 aa)). A compositionally biased stretch (low complexity) spans 402 to 418 (NVSTSNNSPSTDNDSIS). S416 bears the Phosphoserine mark. Residues 419–428 (KSTTEPIQLN) are compositionally biased toward polar residues. A compositionally biased stretch (basic and acidic residues) spans 429 to 440 (NKHDLHLRPETY).

In terms of assembly, homotrimer.

The protein resides in the cytoplasm. Its function is as follows. Capsid protein (CA) is the structural component of the virus-like particle (VLP), forming the shell that encapsulates the retrotransposons dimeric RNA genome. The particles are assembled from trimer-clustered units and there are holes in the capsid shells that allow for the diffusion of macromolecules. CA also has nucleocapsid-like chaperone activity, promoting primer tRNA(i)-Met annealing to the multipartite primer-binding site (PBS), dimerization of Ty1 RNA and initiation of reverse transcription. In Saccharomyces cerevisiae (Baker's yeast), this protein is Transposon TyH3 Gag polyprotein (TY1A).